Reading from the N-terminus, the 505-residue chain is uncharacterized protein (505 aa).

The 248-residue stretch at 193 to 440 (CTNKKCNLCE…LEIKKKYIGR (248 aa)) folds into the Radical SAM core domain. Residues Cys208, Cys216, and Cys219 each coordinate [4Fe-4S] cluster. One can recognise a TRAM domain in the interval 435-499 (KKYIGRVLEV…EKYLEGRILK (65 aa)).

Requires [4Fe-4S] cluster as cofactor.

This is an uncharacterized protein from Methanocaldococcus jannaschii (strain ATCC 43067 / DSM 2661 / JAL-1 / JCM 10045 / NBRC 100440) (Methanococcus jannaschii).